Consider the following 445-residue polypeptide: Pre-B-cell leukemia transcription factor 2 (445 aa).

The segment at 13 to 44 is disordered; the sequence is VGIPGLPIHGGPQTLTPHPMHEPPTDNGEPRK. Basic and acidic residues predominate over residues 31-44; it reads PMHEPPTDNGEPRK. The 195-residue stretch at 42–236 folds into the PBC domain; that stretch reads PRKQDIGDIL…VMILRSRFLD (195 aa). The segment at 49–128 is PBC-A; sequence DILQQIMTIT…EGVAGPEKGG (80 aa). Positions 131–236 are PBC-B; the sequence is AAAAAAAAAS…VMILRSRFLD (106 aa). The homeobox; TALE-type DNA-binding region spans 237–299; it reads ARRKRRNFSK…NKRIRYKKNI (63 aa). The segment covering 319 to 332 has biased composition (polar residues); sequence QGGHSGANSPTTPT. The segment at 319 to 338 is disordered; the sequence is QGGHSGANSPTTPTSAGSGG.

The protein belongs to the TALE/PBX homeobox family.

Its subcellular location is the nucleus. Its function is as follows. Transcriptional activator that binds the sequence 5'-ATCAATCAA-3'. In Xenopus laevis (African clawed frog), this protein is Pre-B-cell leukemia transcription factor 2 (pbx2).